The chain runs to 949 residues: UvrABC system protein A (949 aa).

Residue 42–49 (GLSGSGKS) coordinates ATP. A C4-type zinc finger spans residues 262-289 (CPVCSYSLPELEPRLFSFNNPMGSCPTC). ABC transporter domains follow at residues 319–596 (WDKR…ENSV) and 616–945 (VNPD…KYLK). Residue 649–656 (GVSGSGKS) participates in ATP binding. The segment at 748–774 (CEACQGDGVIKVEMHFLPDVYVPCEVC) adopts a C4-type zinc-finger fold.

This sequence belongs to the ABC transporter superfamily. UvrA family. As to quaternary structure, forms a heterotetramer with UvrB during the search for lesions.

It localises to the cytoplasm. In terms of biological role, the UvrABC repair system catalyzes the recognition and processing of DNA lesions. UvrA is an ATPase and a DNA-binding protein. A damage recognition complex composed of 2 UvrA and 2 UvrB subunits scans DNA for abnormalities. When the presence of a lesion has been verified by UvrB, the UvrA molecules dissociate. This Neisseria meningitidis serogroup B (strain ATCC BAA-335 / MC58) protein is UvrABC system protein A.